Reading from the N-terminus, the 423-residue chain is Tegument protein UL43 (423 aa).

A compositionally biased stretch (polar residues) spans 1–12 (MEKTPAETTAVS). The tract at residues 1-46 (MEKTPAETTAVSAGNVPRDSIPCITNVSADTRGRTRPSRPATVPQR) is disordered.

The protein belongs to the herpesviridae US22 family.

Its subcellular location is the virion tegument. The polypeptide is Tegument protein UL43 (UL43) (Homo sapiens (Human)).